The primary structure comprises 558 residues: Phosphatidylserine lipase ABHD16A (558 aa).

2 consecutive transmembrane segments (helical) span residues 60–80 (ILAL…FAFF) and 93–113 (VVPF…VACL). At 114–558 (RGIGRWTNPQ…AQNFQMPWHL (445 aa)) the chain is on the cytoplasmic side. The AB hydrolase-1 domain occupies 281-407 (LVICCEGNAG…LVTRTVRQHL (127 aa)). Active-site charge relay system residues include Ser-355, Asp-430, and His-507.

It belongs to the AB hydrolase superfamily. ABHD16 family.

The protein resides in the membrane. The enzyme catalyses 1-heptadecanoyl-2-(5Z,8Z,11Z,14Z-eicosatetraenoyl)-sn-glycero-3-phosphoserine + H2O = 1-heptadecanoyl-sn-glycero-3-phosphoserine + (5Z,8Z,11Z,14Z)-eicosatetraenoate + H(+). It carries out the reaction 1-hexadecanoyl-2-(9Z-octadecenoyl)-sn-glycero-3-phospho-L-serine + H2O = 1-hexadecanoyl-sn-glycero-3-phospho-L-serine + (9Z)-octadecenoate + H(+). It catalyses the reaction 1-octadecanoyl-2-(9Z,12Z-octadecadienoyl)-sn-glycero-3-phosphoserine + H2O = 1-octadecanoyl-sn-glycero-3-phosphoserine + (9Z,12Z)-octadecadienoate + H(+). The catalysed reaction is 1-heptadecanoyl-2-(5Z,8Z,11Z,14Z-eicosatetraenoyl)-sn-glycero-3-phosphocholine + H2O = 1-heptadecanoyl-sn-glycero-3-phosphocholine + (5Z,8Z,11Z,14Z)-eicosatetraenoate + H(+). The enzyme catalyses 1-hexadecanoyl-2-(9Z-octadecenoyl)-sn-glycero-3-phosphoglycerol + H2O = 1-hexadecanoyl-sn-glycero-3-phosphoglycerol + (9Z)-octadecenoate + H(+). It carries out the reaction 1-hexadecanoyl-2-(9Z-octadecenoyl)-sn-glycero-3-phospho-(1D-myo-inositol) + H2O = 1-hexadecanoyl-sn-glycero-3-phospho-(1D-myo-inositol) + (9Z)-octadecenoate + H(+). It catalyses the reaction 1-heptadecanoyl-2-(5Z,8Z,11Z,14Z-eicosatetraenoyl)-sn-glycero-3-phosphoethanolamine + H2O = 1-heptadecanoyl-sn-glycero-3-phosphoethanolamine + (5Z,8Z,11Z,14Z)-eicosatetraenoate + H(+). The catalysed reaction is 1-hexadecanoyl-2-(9Z-octadecenoyl)-sn-glycero-3-phospho-(1'-sn-glycerol) + H2O = 1-hexadecanoyl-sn-glycero-3-phospho-(1'-sn-glycerol) + (9Z)-octadecenoate + H(+). The enzyme catalyses Hydrolyzes glycerol monoesters of long-chain fatty acids.. It carries out the reaction 1-tetradecanoylglycerol + H2O = tetradecanoate + glycerol + H(+). It catalyses the reaction 2-hexadecanoylglycerol + H2O = glycerol + hexadecanoate + H(+). The catalysed reaction is 1-(9Z-octadecenoyl)-glycerol + H2O = glycerol + (9Z)-octadecenoate + H(+). The enzyme catalyses 2-(9Z-octadecenoyl)-glycerol + H2O = glycerol + (9Z)-octadecenoate + H(+). It carries out the reaction 2-(9Z,12Z-octadecadienoyl)-glycerol + H2O = (9Z,12Z)-octadecadienoate + glycerol + H(+). It catalyses the reaction 1-(5Z,8Z,11Z,14Z-eicosatetraenoyl)-glycerol + H2O = glycerol + (5Z,8Z,11Z,14Z)-eicosatetraenoate + H(+). The catalysed reaction is 2-(5Z,8Z,11Z,14Z-eicosatetraenoyl)-glycerol + H2O = glycerol + (5Z,8Z,11Z,14Z)-eicosatetraenoate + H(+). The enzyme catalyses prostaglandin D2-1-glycerol ester + H2O = prostaglandin D2 + glycerol + H(+). It carries out the reaction 2-glyceryl-15-deoxy-Delta(12,14)-prostaglandin J2 + H2O = 15-deoxy-Delta(12,14)-prostaglandin J2 + glycerol + H(+). It catalyses the reaction 1-(9Z,12Z-octadecadienoyl)-glycerol + H2O = (9Z,12Z)-octadecadienoate + glycerol + H(+). In terms of biological role, phosphatidylserine (PS) lipase that mediates the hydrolysis of phosphatidylserine to generate lysophosphatidylserine (LPS). LPS constitutes a class of signaling lipids that regulates immunological and neurological processes. Has no activity towards diacylglycerol, triacylglycerol or lysophosphatidylserine lipase. Also has monoacylglycerol lipase activity, with preference for 1-(9Z,12Z-octadecadienoyl)-glycerol (1-LG) and 2-glyceryl-15-deoxy-Delta(12,14)-prostaglandin J2 (15d-PGJ(2)-G). The chain is Phosphatidylserine lipase ABHD16A from Macaca fascicularis (Crab-eating macaque).